A 268-amino-acid chain; its full sequence is L-proline trans-4-hydroxylase (268 aa).

Positions 113, 115, and 218 each coordinate Fe cation.

It belongs to the PhyH family. As to quaternary structure, monomer. Fe(2+) serves as cofactor.

The enzyme catalyses L-proline + 2-oxoglutarate + O2 = trans-4-hydroxy-L-proline + succinate + CO2. It participates in antibiotic biosynthesis. Competitively inhibited by pyridine-2,4-dicarboxylate. Inhibited by diethyl pyrocarbonate (DEPC), 3,4-dihydroxybenzoate, pyridine-2,5-dicarboxylate, alpha,alpha'-dipyridyl, and some metal ions such as Co(2+) and Zn(2+). Its function is as follows. Involved in the biosynthesis of the peptidolactone antibiotic etamycin (viridogrisein). Catalyzes the hydroxylation of free L-proline at the C-4 position to yield trans-4-hydroxy-L-proline. The chain is L-proline trans-4-hydroxylase from Streptomyces griseoviridis.